A 135-amino-acid chain; its full sequence is Early E3 15.3 kDa protein (135 aa).

This sequence belongs to the adenoviridae E3_15 family.

Protects virus-infected cells from TNF-induced cytolysis. This chain is Early E3 15.3 kDa protein, found in Human adenovirus B serotype 7 (HAdV-7).